The following is a 327-amino-acid chain: GMP reductase (327 aa).

Cys-175 (thioimidate intermediate) is an active-site residue. Ile-204 to Val-227 serves as a coordination point for NADP(+).

This sequence belongs to the IMPDH/GMPR family. GuaC type 2 subfamily.

The enzyme catalyses IMP + NH4(+) + NADP(+) = GMP + NADPH + 2 H(+). In terms of biological role, catalyzes the irreversible NADPH-dependent deamination of GMP to IMP. It functions in the conversion of nucleobase, nucleoside and nucleotide derivatives of G to A nucleotides, and in maintaining the intracellular balance of A and G nucleotides. This Lysinibacillus sphaericus (strain C3-41) protein is GMP reductase.